A 454-amino-acid polypeptide reads, in one-letter code: Rhizobactin siderophore biosynthesis protein RhbE (454 aa).

Ala7–Pro13 lines the FAD pocket.

This sequence belongs to the lysine N(6)-hydroxylase/L-ornithine N(5)-oxygenase family. FAD serves as cofactor.

The protein operates within siderophore biosynthesis; rhizobactin biosynthesis. The protein is Rhizobactin siderophore biosynthesis protein RhbE (rhbE) of Rhizobium meliloti (strain 1021) (Ensifer meliloti).